The chain runs to 501 residues: Glutamate--tRNA ligase (501 aa).

Positions 11-21 (PSPTGALHIGG) match the 'HIGH' region motif. Residues 260–264 (KLSKR) carry the 'KMSKS' region motif. Position 263 (Lys-263) interacts with ATP.

Belongs to the class-I aminoacyl-tRNA synthetase family. Glutamate--tRNA ligase type 1 subfamily. Monomer.

The protein resides in the cytoplasm. The catalysed reaction is tRNA(Glu) + L-glutamate + ATP = L-glutamyl-tRNA(Glu) + AMP + diphosphate. In terms of biological role, catalyzes the attachment of glutamate to tRNA(Glu) in a two-step reaction: glutamate is first activated by ATP to form Glu-AMP and then transferred to the acceptor end of tRNA(Glu). This Flavobacterium psychrophilum (strain ATCC 49511 / DSM 21280 / CIP 103535 / JIP02/86) protein is Glutamate--tRNA ligase.